A 155-amino-acid polypeptide reads, in one-letter code: Endoribonuclease YbeY (155 aa).

Zn(2+) is bound by residues H120, H124, and H130.

It belongs to the endoribonuclease YbeY family. Zn(2+) serves as cofactor.

The protein resides in the cytoplasm. Single strand-specific metallo-endoribonuclease involved in late-stage 70S ribosome quality control and in maturation of the 3' terminus of the 16S rRNA. In Staphylococcus aureus (strain Mu3 / ATCC 700698), this protein is Endoribonuclease YbeY.